A 110-amino-acid chain; its full sequence is UPF0060 membrane protein Nmul_A0351 (110 aa).

The next 4 membrane-spanning stretches (helical) occupy residues 7 to 27 (LFLF…PYLW), 33 to 53 (SAWL…LLTL), 63 to 83 (AAYG…VDGV), and 87 to 107 (AWDM…MFGP).

The protein belongs to the UPF0060 family.

It localises to the cell inner membrane. The sequence is that of UPF0060 membrane protein Nmul_A0351 from Nitrosospira multiformis (strain ATCC 25196 / NCIMB 11849 / C 71).